The sequence spans 190 residues: R46 site-specific recombinase (190 aa).

The Resolvase/invertase-type recombinase catalytic domain occupies 2 to 137; that stretch reads RLFGYARVST…EGRQEAKLKG (136 aa). The active-site O-(5'-phospho-DNA)-serine intermediate is Ser10. The H-T-H motif DNA-binding region spans 161-180; it reads ATDIARRLSIARSTVYKILE.

Belongs to the site-specific recombinase resolvase family.

Functionally, site-specific recombination protein. This is R46 site-specific recombinase (tnpR) from Escherichia coli.